A 350-amino-acid chain; its full sequence is MRRLLKPIKDVGIVGYGAYVPMFRIKNEEIGRVWGVNGFPIQEKSVNNLDEDAITIGIEAARNALKRARINPREIRALWFGTESKPYAVKPSATVIAEAIGATPDLDAADFEFACKAGTEALQAAIGFVGSGMAKYAMAIGADTSQGRPGDHLEFTASAGGAAYIVGEKTSDTLAYFEGSYSYVTDTPDFWRRQHEHYPRHGNRFTGEPAYFHQIISAAKGLMEELDYSPSDFDFAVFHQPNVKFPLTVAKILGIPKEKVLPGLLSGIIGNTYSGATLVGISAVLDIAKPGDRILWVSFGSGAGSDAFSLIVQDAIEEKRELAPKTMDYVNRKKYLDYALYAKHRGKYIL.

Glu-83 acts as the Proton donor/acceptor in catalysis. The active-site Acyl-thioester intermediate is the Cys-115. The (3S)-3-hydroxy-3-methylglutaryl-CoA site is built by Cys-115 and Thr-156. Arg-204 provides a ligand contact to CoA. (3S)-3-hydroxy-3-methylglutaryl-CoA-binding residues include Thr-206 and His-239. The active-site Proton donor/acceptor is the His-239. Lys-244 contacts CoA. Positions 271 and 301 each coordinate (3S)-3-hydroxy-3-methylglutaryl-CoA.

It belongs to the thiolase-like superfamily. Archaeal HMG-CoA synthase family. Interacts with acetoacetyl-CoA thiolase that catalyzes the precedent step in the pathway and with a DUF35 protein. The acetoacetyl-CoA thiolase/HMG-CoA synthase complex channels the intermediate via a fused CoA-binding site, which allows for efficient coupling of the endergonic thiolase reaction with the exergonic HMGCS reaction.

The catalysed reaction is acetoacetyl-CoA + acetyl-CoA + H2O = (3S)-3-hydroxy-3-methylglutaryl-CoA + CoA + H(+). It participates in metabolic intermediate biosynthesis; (R)-mevalonate biosynthesis; (R)-mevalonate from acetyl-CoA: step 2/3. Catalyzes the condensation of acetyl-CoA with acetoacetyl-CoA to form 3-hydroxy-3-methylglutaryl-CoA (HMG-CoA). Functions in the mevalonate (MVA) pathway leading to isopentenyl diphosphate (IPP), a key precursor for the biosynthesis of isoprenoid compounds that are building blocks of archaeal membrane lipids. The sequence is that of Hydroxymethylglutaryl-CoA synthase from Thermococcus sibiricus (strain DSM 12597 / MM 739).